A 159-amino-acid chain; its full sequence is Aphid transmission protein (159 aa).

Belongs to the caulimoviridae ORF II family.

In terms of biological role, this protein is involved in virus transmission. This chain is Aphid transmission protein, found in Cauliflower mosaic virus (strain BBC) (CaMV).